The sequence spans 196 residues: Charged multivesicular body protein 1a (196 aa).

At methionine 1 the chain carries N-acetylmethionine. Residues leucine 5–valine 42 are a coiled coil. Residue serine 101 is modified to Phosphoserine. Positions alanine 102–valine 124 form a coiled coil. A Phosphoserine modification is found at serine 173. An MIT-interacting motif motif is present at residues aspartate 185–arginine 195.

The protein belongs to the SNF7 family. Probable peripherally associated component of the endosomal sorting required for transport complex III (ESCRT-III). ESCRT-III components are thought to multimerize to form a flat lattice on the perimeter membrane of the endosome. Several assembly forms of ESCRT-III may exist that interact and act sequentially. Self-associates. Interacts with CHMP1B. Interacts with VPS4A. Interacts with VPS4B. Interacts with PHF1. Interacts with IST1. Interacts with MITD1. Highly expressed in adult heart, kidney and liver. Expressed at lower levels in adult colon, spleen, lung, brain, testis and muscle. Also expressed in myoblasts and embryo fibroblasts.

Its subcellular location is the cytoplasm. The protein localises to the endosome membrane. It is found in the nucleus matrix. Its function is as follows. Probable peripherally associated component of the endosomal sorting required for transport complex III (ESCRT-III) which is involved in multivesicular bodies (MVBs) formation and sorting of endosomal cargo proteins into MVBs. MVBs contain intraluminal vesicles (ILVs) that are generated by invagination and scission from the limiting membrane of the endosome and mostly are delivered to lysosomes enabling degradation of membrane proteins, such as stimulated growth factor receptors, lysosomal enzymes and lipids. The MVB pathway appears to require the sequential function of ESCRT-O, -I,-II and -III complexes. ESCRT-III proteins mostly dissociate from the invaginating membrane before the ILV is released. The ESCRT machinery also functions in topologically equivalent membrane fission events, such as the terminal stages of cytokinesis. ESCRT-III proteins are believed to mediate the necessary vesicle extrusion and/or membrane fission activities, possibly in conjunction with the AAA ATPase VPS4. Involved in cytokinesis. Involved in recruiting VPS4A and/or VPS4B to the midbody of dividing cells. May also be involved in chromosome condensation. Targets the Polycomb group (PcG) protein BMI1/PCGF4 to regions of condensed chromatin. May play a role in stable cell cycle progression and in PcG gene silencing. The sequence is that of Charged multivesicular body protein 1a (Chmp1a) from Mus musculus (Mouse).